Reading from the N-terminus, the 553-residue chain is Dihydroxy-acid dehydratase (553 aa).

Asp-78 is a binding site for Mg(2+). [2Fe-2S] cluster is bound at residue Cys-119. Residues Asp-120 and Lys-121 each contribute to the Mg(2+) site. Residue Lys-121 is modified to N6-carboxylysine. Cys-193 serves as a coordination point for [2Fe-2S] cluster. Glu-441 is a binding site for Mg(2+). Residue Ser-467 is the Proton acceptor of the active site.

It belongs to the IlvD/Edd family. In terms of assembly, homodimer. The cofactor is [2Fe-2S] cluster. Requires Mg(2+) as cofactor.

The enzyme catalyses (2R)-2,3-dihydroxy-3-methylbutanoate = 3-methyl-2-oxobutanoate + H2O. It catalyses the reaction (2R,3R)-2,3-dihydroxy-3-methylpentanoate = (S)-3-methyl-2-oxopentanoate + H2O. It functions in the pathway amino-acid biosynthesis; L-isoleucine biosynthesis; L-isoleucine from 2-oxobutanoate: step 3/4. Its pathway is amino-acid biosynthesis; L-valine biosynthesis; L-valine from pyruvate: step 3/4. Its function is as follows. Functions in the biosynthesis of branched-chain amino acids. Catalyzes the dehydration of (2R,3R)-2,3-dihydroxy-3-methylpentanoate (2,3-dihydroxy-3-methylvalerate) into 2-oxo-3-methylpentanoate (2-oxo-3-methylvalerate) and of (2R)-2,3-dihydroxy-3-methylbutanoate (2,3-dihydroxyisovalerate) into 2-oxo-3-methylbutanoate (2-oxoisovalerate), the penultimate precursor to L-isoleucine and L-valine, respectively. This Geobacter metallireducens (strain ATCC 53774 / DSM 7210 / GS-15) protein is Dihydroxy-acid dehydratase.